The following is a 435-amino-acid chain: MSTIVKVLGREIMDSRGNPTVEAEVHLADGSIGMAAAPSGASTGSREALELRDGDKARYLGKGVLKAVTAVNGPIAEALIGKDAVKQAELDQIMIDLDGTENKAKFGANAILAVSLAAAKAAAVSKKVPLYAHIADLNGTPGVYSMPLPMMNIINGGEHADNSVDIQEFMIQPVGASTFREGLRMGAEVFHSLAKVLKADGHSTAVGDEGGFAPNLESNAAALAAIKVAVANAGYELGKDITLAMDCAASEFYNKETGMYELKGEGKTFTAKEFNYFLEDLVNQYPIVSIEDGLDESDWDGFKHQTELLGDKIQLVGDDLFVTNTKILARGIKEGITNSILIKFNQIGSLTETLAAIKMAKDAGFTAVISHRSGETEDSTIADLAVGTAAGQIKTGSLSRSDRVAKYNQLLRIEEALGSKAPYNGLKEVKGTFNF.

Residue Gln-167 coordinates (2R)-2-phosphoglycerate. The Proton donor role is filled by Glu-209. The Mg(2+) site is built by Asp-246, Glu-291, and Asp-318. Positions 343, 372, 373, and 394 each coordinate (2R)-2-phosphoglycerate. Lys-343 acts as the Proton acceptor in catalysis.

It belongs to the enolase family. As to quaternary structure, component of the RNA degradosome, a multiprotein complex involved in RNA processing and mRNA degradation. Requires Mg(2+) as cofactor.

The protein localises to the cytoplasm. It localises to the secreted. Its subcellular location is the cell surface. The catalysed reaction is (2R)-2-phosphoglycerate = phosphoenolpyruvate + H2O. Its pathway is carbohydrate degradation; glycolysis; pyruvate from D-glyceraldehyde 3-phosphate: step 4/5. Catalyzes the reversible conversion of 2-phosphoglycerate (2-PG) into phosphoenolpyruvate (PEP). It is essential for the degradation of carbohydrates via glycolysis. The sequence is that of Enolase from Psychromonas ingrahamii (strain DSM 17664 / CCUG 51855 / 37).